The primary structure comprises 260 residues: 14-3-3-like protein GF14-F (260 aa).

The interval N241 to H260 is disordered. The span at D247–H260 shows a compositional bias: basic and acidic residues.

This sequence belongs to the 14-3-3 family. As to quaternary structure, may form a complex with the transcriptional activator VP1 and the bZIP transcription factor EMBP1. Expressed in seedlings, roots and panicles and at lower levels in flag leaves and internodes.

The protein resides in the cytoplasm. It is found in the nucleus. Is associated with a DNA binding complex that binds to the G box, a well-characterized cis-acting DNA regulatory element found in plant genes. This Oryza sativa subsp. japonica (Rice) protein is 14-3-3-like protein GF14-F (GF14F).